A 106-amino-acid chain; its full sequence is Small ribosomal subunit protein bS16 (106 aa).

Positions 84-106 are disordered; it reads KREARNNPEKAVPRKERKAADGK.

The protein is Small ribosomal subunit protein bS16 of Rhodopseudomonas palustris (strain ATCC BAA-98 / CGA009).